We begin with the raw amino-acid sequence, 741 residues long: Linoleate 9S-lipoxygenase (741 aa).

The region spanning 1-53 is the PLAT domain; sequence IPGAFYIKNFMQVEFYLKSLTLEDIPNHGTIHFICNSWIYNSKVYKSDRIFFA. Residues 56 to 741 form the Lipoxygenase domain; that stretch reads TYLPSETPAP…SEEGLTFRGI (686 aa). Residues 108–144 form a disordered region; the sequence is ALARPVLGGSTLPYPRRGRTGRPKTKKDPNSEKPSDF. A compositionally biased stretch (basic residues) spans 123–132; it reads RRGRTGRPKT. The span at 133 to 144 shows a compositional bias: basic and acidic residues; that stretch reads KKDPNSEKPSDF. Fe cation-binding residues include His-407, His-412, His-598, and Asn-602.

This sequence belongs to the lipoxygenase family. As to quaternary structure, monomer. The cofactor is Fe cation.

It localises to the cytoplasm. The enzyme catalyses (9Z,12Z)-octadecadienoate + O2 = (9S)-hydroperoxy-(10E,12Z)-octadecadienoate. It carries out the reaction (9Z,12Z)-octadecadienoate + O2 = (13S)-hydroperoxy-(9Z,11E)-octadecadienoate. The catalysed reaction is (9Z,12Z,15Z)-octadecatrienoate + O2 = (13S)-hydroperoxy-(9Z,11E,15Z)-octadecatrienoate. Its pathway is lipid metabolism; oxylipin biosynthesis. Functionally, plant lipoxygenase may be involved in a number of diverse aspects of plant physiology including growth and development, pest resistance, and senescence or responses to wounding. It catalyzes the hydroperoxidation of lipids containing a cis,cis-1,4-pentadiene structure. In Phaseolus vulgaris (Kidney bean), this protein is Linoleate 9S-lipoxygenase.